We begin with the raw amino-acid sequence, 344 residues long: Protein-glutamate methylesterase/protein-glutamine glutaminase 1 (344 aa).

The Response regulatory domain maps to 5 to 122; it reads RVLVVDDSAT…GTQEALAEIV (118 aa). Asp56 is modified (4-aspartylphosphate). Residues 151–343 enclose the CheB-type methylesterase domain; that stretch reads FMPSGDIVAI…QSILDLASAR (193 aa). Catalysis depends on residues Ser163, His189, and Asp285.

It belongs to the CheB family. In terms of processing, phosphorylated by CheA. Phosphorylation of the N-terminal regulatory domain activates the methylesterase activity.

It localises to the cytoplasm. The catalysed reaction is [protein]-L-glutamate 5-O-methyl ester + H2O = L-glutamyl-[protein] + methanol + H(+). The enzyme catalyses L-glutaminyl-[protein] + H2O = L-glutamyl-[protein] + NH4(+). Its function is as follows. Involved in chemotaxis. Part of a chemotaxis signal transduction system that modulates chemotaxis in response to various stimuli. Catalyzes the demethylation of specific methylglutamate residues introduced into the chemoreceptors (methyl-accepting chemotaxis proteins or MCP) by CheR. Also mediates the irreversible deamidation of specific glutamine residues to glutamic acid. The protein is Protein-glutamate methylesterase/protein-glutamine glutaminase 1 of Caulobacter vibrioides (strain ATCC 19089 / CIP 103742 / CB 15) (Caulobacter crescentus).